Consider the following 142-residue polypeptide: MAKKIEAYIKLQVPAGNANPSPPVGPALGQHGVNIMEFCKAFNAQTQSMEKNLPVPVVITVFNDRSFTFITKTPPASVLLKKAAGIQKGSGVPNMDKVGTVTRAQLEEIANTKMADLNANDLDAAVKIIAGSARSMGLNVEG.

It belongs to the universal ribosomal protein uL11 family. In terms of assembly, part of the ribosomal stalk of the 50S ribosomal subunit. Interacts with L10 and the large rRNA to form the base of the stalk. L10 forms an elongated spine to which L12 dimers bind in a sequential fashion forming a multimeric L10(L12)X complex. One or more lysine residues are methylated.

Its function is as follows. Forms part of the ribosomal stalk which helps the ribosome interact with GTP-bound translation factors. The protein is Large ribosomal subunit protein uL11 of Hydrogenovibrio crunogenus (strain DSM 25203 / XCL-2) (Thiomicrospira crunogena).